Reading from the N-terminus, the 677-residue chain is Methionine--tRNA ligase (677 aa).

The 'HIGH' region signature appears at 15 to 25; that stretch reads PYANGSIHLGH. The Zn(2+) site is built by Cys146, Cys149, Cys159, and Cys162. A 'KMSKS' region motif is present at residues 333–337; that stretch reads KMSKS. An ATP-binding site is contributed by Lys336. One can recognise a tRNA-binding domain in the interval 575 to 677; the sequence is DFAKVDLRVA…AGAKPGHQVK (103 aa).

This sequence belongs to the class-I aminoacyl-tRNA synthetase family. MetG type 1 subfamily. As to quaternary structure, homodimer. Zn(2+) serves as cofactor.

Its subcellular location is the cytoplasm. It catalyses the reaction tRNA(Met) + L-methionine + ATP = L-methionyl-tRNA(Met) + AMP + diphosphate. Functionally, is required not only for elongation of protein synthesis but also for the initiation of all mRNA translation through initiator tRNA(fMet) aminoacylation. This chain is Methionine--tRNA ligase, found in Escherichia coli O157:H7.